A 394-amino-acid chain; its full sequence is LL-diaminopimelate aminotransferase (394 aa).

Residues Tyr14 and Gly41 each coordinate substrate. Pyridoxal 5'-phosphate contacts are provided by residues Tyr71, 104–105 (AK), Tyr128, Asn174, Tyr205, and 233–235 (SFS). The substrate site is built by Lys105, Tyr128, and Asn174. Lys236 carries the post-translational modification N6-(pyridoxal phosphate)lysine. The pyridoxal 5'-phosphate site is built by Arg244 and Asn275. Substrate contacts are provided by Asn275 and Arg369.

It belongs to the class-I pyridoxal-phosphate-dependent aminotransferase family. LL-diaminopimelate aminotransferase subfamily. Homodimer. It depends on pyridoxal 5'-phosphate as a cofactor.

It catalyses the reaction (2S,6S)-2,6-diaminopimelate + 2-oxoglutarate = (S)-2,3,4,5-tetrahydrodipicolinate + L-glutamate + H2O + H(+). Its pathway is amino-acid biosynthesis; L-lysine biosynthesis via DAP pathway; LL-2,6-diaminopimelate from (S)-tetrahydrodipicolinate (aminotransferase route): step 1/1. Involved in the synthesis of meso-diaminopimelate (m-DAP or DL-DAP), required for both lysine and peptidoglycan biosynthesis. Catalyzes the direct conversion of tetrahydrodipicolinate to LL-diaminopimelate. This chain is LL-diaminopimelate aminotransferase, found in Chlamydia trachomatis serovar L2b (strain UCH-1/proctitis).